A 67-amino-acid polypeptide reads, in one-letter code: Conotoxin Lt5.9 (67 aa).

The signal sequence occupies residues 1-19 (MLCLPVFIILLLLASPAAP). A propeptide spanning residues 20-46 (KSFETKVQSDLTRTDGNMETEENLGEV) is cleaved from the precursor.

The protein belongs to the conotoxin T superfamily. Contains 2 disulfide bonds that can be either 'C1-C3, C2-C4' or 'C1-C4, C2-C3', since these disulfide connectivities have been observed for conotoxins with cysteine framework V (for examples, see AC P0DQQ7 and AC P81755). Expressed by the venom duct.

It localises to the secreted. In Conus litteratus (Lettered cone), this protein is Conotoxin Lt5.9.